The primary structure comprises 177 residues: MSRVAKMPVTIPAGVDVSVKDDQIAVKGAGGTLSLAQNVLVKVTSSDGKLRFEPANESRQANAMSGTLRQLVNNMVLGVSKGFEKKLSLVGVGYKAAAAGAKLNLVVGYSHPVNIDMPAGITVTTPTPTEVVVKGADRQRVGQIAAEIRAVRPPEPYKGKGIRYADEKITIKETKKK.

This sequence belongs to the universal ribosomal protein uL6 family. As to quaternary structure, part of the 50S ribosomal subunit.

Its function is as follows. This protein binds to the 23S rRNA, and is important in its secondary structure. It is located near the subunit interface in the base of the L7/L12 stalk, and near the tRNA binding site of the peptidyltransferase center. This chain is Large ribosomal subunit protein uL6, found in Verminephrobacter eiseniae (strain EF01-2).